The sequence spans 124 residues: uncharacterized protein (124 aa).

The helical transmembrane segment at L70–I90 threads the bilayer.

The protein localises to the membrane. This is an uncharacterized protein from Saccharomyces cerevisiae (strain ATCC 204508 / S288c) (Baker's yeast).